We begin with the raw amino-acid sequence, 429 residues long: Glutamyl-tRNA reductase (429 aa).

Substrate is bound by residues 56-59 (TCNR), serine 119, 124-126 (EPQ), and glutamine 130. Catalysis depends on cysteine 57, which acts as the Nucleophile. An NADP(+)-binding site is contributed by 199–204 (GAGEMI).

It belongs to the glutamyl-tRNA reductase family. In terms of assembly, homodimer.

It catalyses the reaction (S)-4-amino-5-oxopentanoate + tRNA(Glu) + NADP(+) = L-glutamyl-tRNA(Glu) + NADPH + H(+). The protein operates within porphyrin-containing compound metabolism; protoporphyrin-IX biosynthesis; 5-aminolevulinate from L-glutamyl-tRNA(Glu): step 1/2. Catalyzes the NADPH-dependent reduction of glutamyl-tRNA(Glu) to glutamate 1-semialdehyde (GSA). The chain is Glutamyl-tRNA reductase from Herminiimonas arsenicoxydans.